A 143-amino-acid chain; its full sequence is Small ribosomal subunit protein uS9A (143 aa).

Ser2 carries the N-acetylserine modification. Residue Lys30 forms a Glycyl lysine isopeptide (Lys-Gly) (interchain with G-Cter in ubiquitin) linkage. The residue at position 34 (Ser34) is a Phosphoserine. Residues Lys47 and Lys59 each participate in a glycyl lysine isopeptide (Lys-Gly) (interchain with G-Cter in ubiquitin) cross-link. Phosphoserine is present on Ser61. Thr70 carries the phosphothreonine modification. Position 76 is a phosphoserine (Ser76). A disordered region spans residues 123–143 (RPEPKKFGGKGARSRFQKSYR). The segment covering 134-143 (ARSRFQKSYR) has biased composition (basic residues).

The protein belongs to the universal ribosomal protein uS9 family. As to quaternary structure, component of the small ribosomal subunit (SSU). Mature yeast ribosomes consist of a small (40S) and a large (60S) subunit. The 40S small subunit contains 1 molecule of ribosomal RNA (18S rRNA) and 33 different proteins (encoded by 57 genes). The large 60S subunit contains 3 rRNA molecules (25S, 5.8S and 5S rRNA) and 46 different proteins (encoded by 81 genes).

It localises to the cytoplasm. Its function is as follows. Component of the ribosome, a large ribonucleoprotein complex responsible for the synthesis of proteins in the cell. The small ribosomal subunit (SSU) binds messenger RNAs (mRNAs) and translates the encoded message by selecting cognate aminoacyl-transfer RNA (tRNA) molecules. The large subunit (LSU) contains the ribosomal catalytic site termed the peptidyl transferase center (PTC), which catalyzes the formation of peptide bonds, thereby polymerizing the amino acids delivered by tRNAs into a polypeptide chain. The nascent polypeptides leave the ribosome through a tunnel in the LSU and interact with protein factors that function in enzymatic processing, targeting, and the membrane insertion of nascent chains at the exit of the ribosomal tunnel. The sequence is that of Small ribosomal subunit protein uS9A from Saccharomyces cerevisiae (strain ATCC 204508 / S288c) (Baker's yeast).